We begin with the raw amino-acid sequence, 812 residues long: Mitochondrial intermediate peptidase (812 aa).

The transit peptide at 1-29 (MRLSRQLLRSTPFLTRAKPVSGKVSHFRS) directs the protein to the mitochondrion. The segment at 19 to 49 (PVSGKVSHFRSRTDLKGGSSNSSKSPDSVGD) is disordered. Residues 37-46 (SSNSSKSPDS) are compositionally biased toward low complexity. Position 595 (H595) interacts with Zn(2+). E596 is an active-site residue. Residues H599 and H602 each contribute to the Zn(2+) site.

Belongs to the peptidase M3 family. Zn(2+) serves as cofactor.

The protein localises to the mitochondrion matrix. The enzyme catalyses Release of an N-terminal octapeptide as second stage of processing of some proteins imported into the mitochondrion.. Functionally, cleaves proteins, imported into the mitochondrion, to their mature size. While most mitochondrial precursor proteins are processed to the mature form in one step by mitochondrial processing peptidase (MPP), the sequential cleavage by MIP of an octapeptide after initial processing by MPP is a required step for a subgroup of nuclear-encoded precursor proteins destined for the matrix or the inner membrane. This chain is Mitochondrial intermediate peptidase (OCT1), found in Scheffersomyces stipitis (strain ATCC 58785 / CBS 6054 / NBRC 10063 / NRRL Y-11545) (Yeast).